Here is a 61-residue protein sequence, read N- to C-terminus: MATTSAEAKMRKPQKFATRYRNRCRLCGRPRGYYRDFGICRICLRKLAYNGEIPGVTKSSW.

Zn(2+)-binding residues include Cys-24, Cys-27, Cys-40, and Cys-43.

It belongs to the universal ribosomal protein uS14 family. Zinc-binding uS14 subfamily. As to quaternary structure, part of the 30S ribosomal subunit. Contacts proteins S3 and S10. The cofactor is Zn(2+).

Binds 16S rRNA, required for the assembly of 30S particles and may also be responsible for determining the conformation of the 16S rRNA at the A site. The polypeptide is Small ribosomal subunit protein uS14 (Endomicrobium trichonymphae).